We begin with the raw amino-acid sequence, 1059 residues long: Carbamoyl phosphate synthase large chain (1059 aa).

The interval 1–401 (MPKRKDIQKI…SLLKACRSLE (401 aa)) is carboxyphosphate synthetic domain. 12 residues coordinate ATP: R129, R169, G175, G176, R208, I210, E215, G241, I242, H243, Q284, and E298. One can recognise an ATP-grasp 1 domain in the interval 133 to 327 (KQLMEELGQP…IAKLAAKIAV (195 aa)). Residues Q284, E298, and N300 each coordinate Mg(2+). 3 residues coordinate Mn(2+): Q284, E298, and N300. The interval 402–546 (VGVDHNELPA…YSTYGFENES (145 aa)) is oligomerization domain. Residues 547–929 (VKSSKESVLV…ALYKAFEASY (383 aa)) form a carbamoyl phosphate synthetic domain region. The 191-residue stretch at 671-861 (EQALKELDIP…MAQVATRLIL (191 aa)) folds into the ATP-grasp 2 domain. The ATP site is built by R707, S746, I748, E752, G777, V778, H779, S780, Q820, and E832. Mg(2+)-binding residues include Q820, E832, and N834. Positions 820, 832, and 834 each coordinate Mn(2+). The region spanning 930–1059 (LHLPNFGNVV…ESRSFTTEAI (130 aa)) is the MGS-like domain. The interval 930-1059 (LHLPNFGNVV…ESRSFTTEAI (130 aa)) is allosteric domain.

This sequence belongs to the CarB family. As to quaternary structure, composed of two chains; the small (or glutamine) chain promotes the hydrolysis of glutamine to ammonia, which is used by the large (or ammonia) chain to synthesize carbamoyl phosphate. Tetramer of heterodimers (alpha,beta)4. It depends on Mg(2+) as a cofactor. Requires Mn(2+) as cofactor.

The catalysed reaction is hydrogencarbonate + L-glutamine + 2 ATP + H2O = carbamoyl phosphate + L-glutamate + 2 ADP + phosphate + 2 H(+). The enzyme catalyses hydrogencarbonate + NH4(+) + 2 ATP = carbamoyl phosphate + 2 ADP + phosphate + 2 H(+). It participates in amino-acid biosynthesis; L-arginine biosynthesis; carbamoyl phosphate from bicarbonate: step 1/1. It functions in the pathway pyrimidine metabolism; UMP biosynthesis via de novo pathway; (S)-dihydroorotate from bicarbonate: step 1/3. Large subunit of the glutamine-dependent carbamoyl phosphate synthetase (CPSase). CPSase catalyzes the formation of carbamoyl phosphate from the ammonia moiety of glutamine, carbonate, and phosphate donated by ATP, constituting the first step of 2 biosynthetic pathways, one leading to arginine and/or urea and the other to pyrimidine nucleotides. The large subunit (synthetase) binds the substrates ammonia (free or transferred from glutamine from the small subunit), hydrogencarbonate and ATP and carries out an ATP-coupled ligase reaction, activating hydrogencarbonate by forming carboxy phosphate which reacts with ammonia to form carbamoyl phosphate. The sequence is that of Carbamoyl phosphate synthase large chain from Streptococcus gordonii (strain Challis / ATCC 35105 / BCRC 15272 / CH1 / DL1 / V288).